The chain runs to 213 residues: MRACNTLLPTAIVLTSCDALSAHRAQIMNVATSDLISPIESTVQDDNYDRQLRGFYATENTDPVNNQDTAHEDGEERVNVATVLGKGDEAWDDALMRLAYQHWFDGGKTSDGMRLIMDLPAKGEALRHPNWGKYIKYLEFVKEKKKEAADAAAVAALKRRRTYRGWYVDGKTEKDVRKIFGLPATGKAKNHPNWADFQEYLNVVREYSKVVFK.

The N-terminal stretch at 1–19 (MRACNTLLPTAIVLTSCDA) is a signal peptide. The RxLR-dEER signature appears at 50–77 (RQLRGFYATENTDPVNNQDTAHEDGEER).

This sequence belongs to the RxLR effector family.

It localises to the secreted. Its subcellular location is the host nucleus. In terms of biological role, effector that enhances P.infestans colonization of Nicotiana benthamiana leaves. This Phytophthora infestans (strain T30-4) (Potato late blight agent) protein is RxLR effector protein PexRD1.